The primary structure comprises 78 residues: Putative protein PeaD (78 aa).

This sequence belongs to the phage P protein family.

The sequence is that of Putative protein PeaD (peaD) from Escherichia coli (strain K12).